Consider the following 255-residue polypeptide: Diphthine synthase (255 aa).

Residues Leu9, Asp85, Val88, 113-114 (SI), Leu164, Ala207, and His232 each bind S-adenosyl-L-methionine.

This sequence belongs to the diphthine synthase family. Homodimer.

The catalysed reaction is 2-[(3S)-amino-3-carboxypropyl]-L-histidyl-[translation elongation factor 2] + 3 S-adenosyl-L-methionine = diphthine-[translation elongation factor 2] + 3 S-adenosyl-L-homocysteine + 3 H(+). It functions in the pathway protein modification; peptidyl-diphthamide biosynthesis. S-adenosyl-L-methionine-dependent methyltransferase that catalyzes the trimethylation of the amino group of the modified target histidine residue in translation elongation factor 2 (EF-2), to form an intermediate called diphthine. The three successive methylation reactions represent the second step of diphthamide biosynthesis. In Methanococcus maripaludis (strain DSM 14266 / JCM 13030 / NBRC 101832 / S2 / LL), this protein is Diphthine synthase.